The sequence spans 378 residues: Aminomethyltransferase (378 aa).

Belongs to the GcvT family. The glycine cleavage system is composed of four proteins: P, T, L and H.

The catalysed reaction is N(6)-[(R)-S(8)-aminomethyldihydrolipoyl]-L-lysyl-[protein] + (6S)-5,6,7,8-tetrahydrofolate = N(6)-[(R)-dihydrolipoyl]-L-lysyl-[protein] + (6R)-5,10-methylene-5,6,7,8-tetrahydrofolate + NH4(+). The glycine cleavage system catalyzes the degradation of glycine. The polypeptide is Aminomethyltransferase (Acidobacterium capsulatum (strain ATCC 51196 / DSM 11244 / BCRC 80197 / JCM 7670 / NBRC 15755 / NCIMB 13165 / 161)).